The sequence spans 263 residues: 7beta-hydroxysteroid dehydrogenase (263 aa).

Residues 17–21 (TEGVG), 40–41 (RR), and 66–67 (DF) each bind NADP(+). Residue Tyr-156 is the Proton acceptor of the active site. Ser-240 is an NADP(+) binding site.

It belongs to the short-chain dehydrogenases/reductases (SDR) family. In terms of assembly, homodimer.

The catalysed reaction is a 7beta-hydroxysteroid + NADP(+) = a 7-oxosteroid + NADPH + H(+). The enzyme catalyses 7-oxolithocholate + NADPH + H(+) = ursodeoxycholate + NADP(+). It catalyses the reaction 7beta-hydroxy-3,12-dioxo-5beta-cholan-24-oate + NADP(+) = dehydrocholate + NADPH + H(+). It carries out the reaction ursocholate + NADP(+) = 3alpha,12alpha-dihydroxy-7-oxo-5beta-cholanate + NADPH + H(+). 7beta-hydroxysteroid dehydrogenase that catalyzes the reduction of the 7-oxo group of 7-oxo-lithocholate (7-oxo-LCA), to yield ursodeoxycholate (UDCA). As C.aerofaciens is an intestinal bacterium, this enzyme probably contributes to the formation of UDCA in the human colon. UDCA is regarded as a chemopreventive beneficial secondary bile acid due to its low hydrophobicity; it protects hepatocytes and bile duct epithelial cells against necrosis and apoptosis induced by more hydrophobic secondary bile acids like deoxycholate (DCA). This enzyme is also able to catalyze the reverse reaction, i.e. the oxidation of the 7beta-hydroxy group of UDCA to 7-oxo-LCA. To a lesser extent, is also active on the taurine- and glycine-conjugates of ursodeoxycholate. It is specific for NADPH/NADP(+) as the electron acceptor/donor since it is not active with NADH/NAD(+). In the presence of NADPH, 7beta-HSDH can also reduce dehydrocholate. And is also able to oxidize ursocholate. This is 7beta-hydroxysteroid dehydrogenase from Collinsella aerofaciens (strain ATCC 25986 / DSM 3979 / JCM 10188 / KCTC 3647 / NCTC 11838 / VPI 1003).